The primary structure comprises 152 residues: Nucleoside diphosphate kinase (152 aa).

Lys-11, Phe-59, Arg-87, Thr-93, Arg-104, and Asn-114 together coordinate ATP. His-117 (pros-phosphohistidine intermediate) is an active-site residue.

It belongs to the NDK family. In terms of assembly, homotetramer. The cofactor is Mg(2+).

The protein localises to the cytoplasm. It catalyses the reaction dZDP + ATP = dZTP + ADP. The enzyme catalyses a 2'-deoxyribonucleoside 5'-diphosphate + ATP = a 2'-deoxyribonucleoside 5'-triphosphate + ADP. It carries out the reaction a ribonucleoside 5'-diphosphate + ATP = a ribonucleoside 5'-triphosphate + ADP. The protein operates within purine metabolism. Major role in the synthesis of nucleoside triphosphates other than ATP. The ATP gamma phosphate is transferred to the NDP beta phosphate via a ping-pong mechanism, using a phosphorylated active-site intermediate. Functionally, (Microbial infection) Catalyzes the phosphorylation of dZDP to dZTP, when the bacterium is infected by a phage that produces the substrate for the synthesis of dZTP (2- amino-2'-deoxyadenosine 5'-triphosphate), which is then used by the phage as a DNA polymerase substrate. The sequence is that of Nucleoside diphosphate kinase from Synechococcus sp. (strain WH7803).